We begin with the raw amino-acid sequence, 571 residues long: Septation ring formation regulator EzrA (571 aa).

Residues 1-3 lie on the Extracellular side of the membrane; sequence MYY. A helical transmembrane segment spans residues 4 to 22; that stretch reads MLIGFIIVVIAVIGAGYIL. The Cytoplasmic portion of the chain corresponds to 23 to 571; it reads KRKHYQRINE…ASKVSVDDIE (549 aa). 5 coiled-coil regions span residues 102–147, 248–298, 326–374, 400–437, and 478–529; these read ATNA…TKEK, LAQM…DTLE, DALA…ASGE, KFAE…ERER, and RIAE…ENHF.

This sequence belongs to the EzrA family.

It is found in the cell membrane. Its function is as follows. Negative regulator of FtsZ ring formation; modulates the frequency and position of FtsZ ring formation. Inhibits FtsZ ring formation at polar sites. Interacts either with FtsZ or with one of its binding partners to promote depolymerization. In Listeria monocytogenes serotype 4a (strain HCC23), this protein is Septation ring formation regulator EzrA.